The primary structure comprises 369 residues: Cobalt-precorrin-5B C(1)-methyltransferase (369 aa).

It belongs to the CbiD family.

It carries out the reaction Co-precorrin-5B + S-adenosyl-L-methionine = Co-precorrin-6A + S-adenosyl-L-homocysteine. The protein operates within cofactor biosynthesis; adenosylcobalamin biosynthesis; cob(II)yrinate a,c-diamide from sirohydrochlorin (anaerobic route): step 6/10. Catalyzes the methylation of C-1 in cobalt-precorrin-5B to form cobalt-precorrin-6A. The chain is Cobalt-precorrin-5B C(1)-methyltransferase from Brucella melitensis biotype 1 (strain ATCC 23456 / CCUG 17765 / NCTC 10094 / 16M).